A 309-amino-acid polypeptide reads, in one-letter code: MSIRIIPQDELGSSEKRTADMIPPLLFPRLKNVYNRRAERLRELAESNPLGDYLRFAALIAHAQEVVLYDHPLEMDLTARIKEANEQGKPPLDIHVLPRDKHWQKLLHSLIAELKPEMSGPALAVIENLEKASDQELEQMASALFDSDFSYVSSDKAPFIWAALSLYWAQMASLIPGKARAEYGEARQYCPVCGSMPVSSVVQIGTTQGLRYLHCNLCETEWHVVRVKCSNCEQSRDLHYWSLENEQAAVKTESCGDCGTYLKILYQEKDPKVEAVADDLASLVLDARMEQEGFARSSINPFLFPGEGE.

This sequence belongs to the FdhE family.

It is found in the cytoplasm. Necessary for formate dehydrogenase activity. In Salmonella arizonae (strain ATCC BAA-731 / CDC346-86 / RSK2980), this protein is Protein FdhE.